A 197-amino-acid polypeptide reads, in one-letter code: MIASVRGTLIAVAADHVVIETGGIGWMIYAPRQVLAAPGDIGAEMRLFTCLIVREDALTLYGFKTVEQRQLFETLLSVTGVGPQAALNLLSSGTTDELRLAIATGDVARLARTPRIGKKLAERLVLELKGKLDIKGLPVAPGVSPAVAAVNAELSEMLVSLGFSSAEASTAIAALPPDAPLDLEERLRLALRYFGAR.

The tract at residues 1-64 (MIASVRGTLI…EDALTLYGFK (64 aa)) is domain I. Residues 65–145 (TVEQRQLFET…GLPVAPGVSP (81 aa)) are domain II. The flexible linker stretch occupies residues 146-153 (AVAAVNAE). A domain III region spans residues 153-197 (ELSEMLVSLGFSSAEASTAIAALPPDAPLDLEERLRLALRYFGAR).

Belongs to the RuvA family. In terms of assembly, homotetramer. Forms an RuvA(8)-RuvB(12)-Holliday junction (HJ) complex. HJ DNA is sandwiched between 2 RuvA tetramers; dsDNA enters through RuvA and exits via RuvB. An RuvB hexamer assembles on each DNA strand where it exits the tetramer. Each RuvB hexamer is contacted by two RuvA subunits (via domain III) on 2 adjacent RuvB subunits; this complex drives branch migration. In the full resolvosome a probable DNA-RuvA(4)-RuvB(12)-RuvC(2) complex forms which resolves the HJ.

The protein localises to the cytoplasm. The RuvA-RuvB-RuvC complex processes Holliday junction (HJ) DNA during genetic recombination and DNA repair, while the RuvA-RuvB complex plays an important role in the rescue of blocked DNA replication forks via replication fork reversal (RFR). RuvA specifically binds to HJ cruciform DNA, conferring on it an open structure. The RuvB hexamer acts as an ATP-dependent pump, pulling dsDNA into and through the RuvAB complex. HJ branch migration allows RuvC to scan DNA until it finds its consensus sequence, where it cleaves and resolves the cruciform DNA. This Roseiflexus castenholzii (strain DSM 13941 / HLO8) protein is Holliday junction branch migration complex subunit RuvA.